We begin with the raw amino-acid sequence, 195 residues long: Nicotinamide riboside kinase 2 (195 aa).

9-17 (GVTNGGKTT) is an ATP binding site. Residues Thr-16 and Asp-35 each contribute to the Mg(2+) site. Asp-35 (proton acceptor) is an active-site residue. Residues 35-38 (DDFF) and 54-55 (WD) each bind substrate. An ATP-binding site is contributed by Arg-130. Substrate-binding positions include Arg-131 and 136–137 (YM). Residues 134–136 (RTY) and 174–176 (KSP) each bind ATP.

This sequence belongs to the uridine kinase family. NRK subfamily. Monomer. Interacts with ITGB1 alone or when associated with alpha-7, but not with alpha-5. As to expression, expressed in skeletal muscle (at protein level).

It catalyses the reaction beta-nicotinamide D-riboside + ATP = beta-nicotinamide D-ribonucleotide + ADP + H(+). The catalysed reaction is beta-D-ribosylnicotinate + ATP = nicotinate beta-D-ribonucleotide + ADP + H(+). It participates in cofactor biosynthesis; NAD(+) biosynthesis. Its function is as follows. Catalyzes the phosphorylation of nicotinamide riboside (NR) and nicotinic acid riboside (NaR) to form nicotinamide mononucleotide (NMN) and nicotinic acid mononucleotide (NaMN). Reduces laminin matrix deposition and cell adhesion to laminin, but not to fibronectin. Involved in the regulation of PXN at the protein level and of PXN tyrosine phosphorylation. May play a role in the regulation of terminal myogenesis. The sequence is that of Nicotinamide riboside kinase 2 (Nmrk2) from Mus musculus (Mouse).